The following is a 315-amino-acid chain: Aspartate carbamoyltransferase catalytic subunit (315 aa).

The carbamoyl phosphate site is built by Arg-65 and Thr-66. Lys-93 is a binding site for L-aspartate. Carbamoyl phosphate contacts are provided by Arg-115, His-145, and Gln-148. L-aspartate is bound by residues Arg-179 and Arg-234. Carbamoyl phosphate is bound by residues Gly-275 and Pro-276.

The protein belongs to the aspartate/ornithine carbamoyltransferase superfamily. ATCase family. As to quaternary structure, heterododecamer (2C3:3R2) of six catalytic PyrB chains organized as two trimers (C3), and six regulatory PyrI chains organized as three dimers (R2).

The enzyme catalyses carbamoyl phosphate + L-aspartate = N-carbamoyl-L-aspartate + phosphate + H(+). It functions in the pathway pyrimidine metabolism; UMP biosynthesis via de novo pathway; (S)-dihydroorotate from bicarbonate: step 2/3. Catalyzes the condensation of carbamoyl phosphate and aspartate to form carbamoyl aspartate and inorganic phosphate, the committed step in the de novo pyrimidine nucleotide biosynthesis pathway. This chain is Aspartate carbamoyltransferase catalytic subunit, found in Xanthomonas euvesicatoria pv. vesicatoria (strain 85-10) (Xanthomonas campestris pv. vesicatoria).